The following is a 360-amino-acid chain: Chorismate synthase (360 aa).

Positions 48 and 54 each coordinate NADP(+). FMN is bound by residues 125-127, 246-247, Gly286, 301-305, and Arg327; these read RSS, NA, and KPTSS.

The protein belongs to the chorismate synthase family. In terms of assembly, homotetramer. Requires FMNH2 as cofactor.

The enzyme catalyses 5-O-(1-carboxyvinyl)-3-phosphoshikimate = chorismate + phosphate. The protein operates within metabolic intermediate biosynthesis; chorismate biosynthesis; chorismate from D-erythrose 4-phosphate and phosphoenolpyruvate: step 7/7. Functionally, catalyzes the anti-1,4-elimination of the C-3 phosphate and the C-6 proR hydrogen from 5-enolpyruvylshikimate-3-phosphate (EPSP) to yield chorismate, which is the branch point compound that serves as the starting substrate for the three terminal pathways of aromatic amino acid biosynthesis. This reaction introduces a second double bond into the aromatic ring system. This chain is Chorismate synthase, found in Actinobacillus pleuropneumoniae serotype 7 (strain AP76).